Here is a 443-residue protein sequence, read N- to C-terminus: Glutamate--tRNA ligase 1 (443 aa).

The 'HIGH' region signature appears at 10–20 (PSPTGYIHVGN). The short motif at 241 to 245 (ALSKR) is the 'KMSKS' region element. ATP is bound at residue Lys-244.

This sequence belongs to the class-I aminoacyl-tRNA synthetase family. Glutamate--tRNA ligase type 1 subfamily. In terms of assembly, monomer.

The protein resides in the cytoplasm. The enzyme catalyses tRNA(Glu) + L-glutamate + ATP = L-glutamyl-tRNA(Glu) + AMP + diphosphate. In terms of biological role, catalyzes the attachment of glutamate to tRNA(Glu) in a two-step reaction: glutamate is first activated by ATP to form Glu-AMP and then transferred to the acceptor end of tRNA(Glu). This is Glutamate--tRNA ligase 1 from Ruegeria pomeroyi (strain ATCC 700808 / DSM 15171 / DSS-3) (Silicibacter pomeroyi).